The chain runs to 257 residues: tRNA-cytidine(32) 2-sulfurtransferase (257 aa).

Residues 37-42 (SGGKDS) carry the PP-loop motif motif. [4Fe-4S] cluster contacts are provided by cysteine 112, cysteine 115, and cysteine 202.

This sequence belongs to the TtcA family. In terms of assembly, homodimer. Mg(2+) is required as a cofactor. The cofactor is [4Fe-4S] cluster.

The protein resides in the cytoplasm. The enzyme catalyses cytidine(32) in tRNA + S-sulfanyl-L-cysteinyl-[cysteine desulfurase] + AH2 + ATP = 2-thiocytidine(32) in tRNA + L-cysteinyl-[cysteine desulfurase] + A + AMP + diphosphate + H(+). It participates in tRNA modification. Its function is as follows. Catalyzes the ATP-dependent 2-thiolation of cytidine in position 32 of tRNA, to form 2-thiocytidine (s(2)C32). The sulfur atoms are provided by the cysteine/cysteine desulfurase (IscS) system. In Geobacter metallireducens (strain ATCC 53774 / DSM 7210 / GS-15), this protein is tRNA-cytidine(32) 2-sulfurtransferase.